Here is a 304-residue protein sequence, read N- to C-terminus: Galactofuranosyltransferase GlfT1 (304 aa).

The protein belongs to the glycosyltransferase 2 family. Is probably part of an AG biosynthetic complex.

Its subcellular location is the cell membrane. It localises to the secreted. The protein localises to the cell wall. The catalysed reaction is alpha-L-rhamnosyl-(1-&gt;3)-N-acetyl-alpha-D-glucosaminyl-diphospho-trans,octa-cis-decaprenol + 2 UDP-alpha-D-galactofuranose = beta-D-galactofuranosyl-(1-&gt;5)-beta-D-galactofuranosyl-(1-&gt;4)-alpha-L-rhamnosyl-(1-&gt;3)-N-acetyl-alpha-D-glucosaminyl-diphospho-trans,octa-cis-decaprenol + 2 UDP + 2 H(+). It functions in the pathway cell wall biogenesis; cell wall polysaccharide biosynthesis. Its function is as follows. Involved in the biosynthesis of the arabinogalactan (AG) region of the mycolylarabinogalactan-peptidoglycan (mAGP) complex, an essential component of the mycobacterial cell wall. Catalyzes the transfer of the first two galactofuranosyl (Galf) units from UDP-galactofuranose (UDP-Galf) onto the rhamnosyl-GlcNAc-diphospho-decaprenol (Rha-GlcNAc-PP-C50) acceptor, yielding galactofuranosyl-galactofuranosyl-rhamnosyl-GlcNAc-diphospho-decaprenol (Galf-Galf-Rha-GlcNAc-PP-C50). Thus, GlfT1 is the initiator of galactan synthesis, while GlfT2 continues with the subsequent polymerization events. This is Galactofuranosyltransferase GlfT1 from Mycobacterium tuberculosis (strain CDC 1551 / Oshkosh).